Consider the following 1002-residue polypeptide: Leucine-rich repeat receptor-like serine/threonine-protein kinase BAM2 (1002 aa).

The N-terminal stretch at 1–22 (MKLLLLLLLLLLLHISHSFTVA) is a signal peptide. Over 23–636 (KPITELHALL…SHVKPLSATT (614 aa)) the chain is Extracellular. Asn51, Asn80, Asn97, Asn123, Asn130, Asn153, and Asn164 each carry an N-linked (GlcNAc...) asparagine glycan. 22 LRR repeats span residues 68 to 92 (LRHVTSLDLSGLNLSGTLSSDVAHL), 93 to 116 (PLLQNLSLAANQISGPIPPQISNL), 118 to 140 (ELRHLNLSNNVFNGSFPDELSSG), 141 to 165 (LVNLRVLDLYNNNLTGDLPVSLTNL), 167 to 188 (QLRHLHLGGNYFSGKIPATYGT), 189 to 213 (WPVLEYLAVSGNELTGKIPPEIGNL), 215 to 238 (TLRELYIGYYNAFENGLPPEIGNL), 239 to 262 (SELVRFDAANCGLTGEIPPEIGKL), 263 to 285 (QKLDTLFLQVNAFTGTITQELGL), 286 to 309 (ISSLKSMDLSNNMFTGEIPTSFSQ), 311 to 334 (KNLTLLNLFRNKLYGAIPEFIGEM), 335 to 358 (PELEVLQLWENNFTGSIPQKLGEN), 359 to 382 (GRLVILDLSSNKLTGTLPPNMCSG), 384 to 406 (RLMTLITLGNFLFGSIPDSLGKC), 407 to 430 (ESLTRIRMGENFLNGSIPKELFGL), 431 to 456 (PKLSQVELQDNYLTGELPISGGGVSG), 458 to 479 (LGQISLSNNQLSGSLPAAIGNL), 480 to 503 (SGVQKLLLDGNKFSGSIPPEIGRL), 505 to 527 (QLSKLDFSHNLFSGRIAPEISRC), 528 to 551 (KLLTFVDLSRNELSGDIPNELTGM), 552 to 575 (KILNYLNLSRNHLVGSIPVTIASM), and 577 to 600 (SLTSVDFSYNNLSGLVPSTGQFSY). Asn212 and Asn237 each carry an N-linked (GlcNAc...) asparagine glycan. N-linked (GlcNAc...) asparagine glycosylation is found at Asn312 and Asn346. Asn420 is a glycosylation site (N-linked (GlcNAc...) asparagine). Asn478 carries an N-linked (GlcNAc...) asparagine glycan. 3 N-linked (GlcNAc...) asparagine glycosylation sites follow: Asn558, Asn587, and Asn602. Residues 637–657 (KLLLVLGLLFCSMVFAIVAII) traverse the membrane as a helical segment. Topologically, residues 658–1002 (KARSLRNASE…SGSPPDLLSN (345 aa)) are cytoplasmic. Position 682 is a phosphothreonine (Thr682). A Protein kinase domain is found at 690 to 967 (LKEDNIIGKG…VQILTEIPKI (278 aa)). ATP is bound by residues 696-704 (IGKGGAGIV) and Lys718. A phosphotyrosine mark is found at Tyr765 and Tyr803. The active-site Proton acceptor is Asp816. Phosphoserine is present on Ser851. Tyr859 and Tyr866 each carry phosphotyrosine. Position 867 is a phosphothreonine (Thr867). A disordered region spans residues 969–1002 (LSKQQAAESDVTEKAPAINESSPDSGSPPDLLSN). A compositionally biased stretch (low complexity) spans 989 to 1002 (SSPDSGSPPDLLSN).

It belongs to the protein kinase superfamily. Ser/Thr protein kinase family. Interacts with BAM1 and CLV1. Binds to the CLV3, CLE11, CLE18, CLE19, CLE22, CLE25, CLE26, CLE40, CLE41 and CLE42 mature peptides, probably via its extracellular leucine-rich repeat region. In terms of tissue distribution, expressed in seedlings, roots, rosette leaves, stems, inflorescences, flowers and siliques.

It localises to the cell membrane. It catalyses the reaction L-seryl-[protein] + ATP = O-phospho-L-seryl-[protein] + ADP + H(+). The enzyme catalyses L-threonyl-[protein] + ATP = O-phospho-L-threonyl-[protein] + ADP + H(+). Functionally, necessary for male gametophyte development, as well as ovule specification and function. Involved in cell-cell communication process required during early anther development, and regulating cell division and differentiation to organize cell layers. Required for the development of high-ordered vascular strands within the leaf and a correlated control of leaf shape, size and symmetry. May regulate the CLV1-dependent CLV3-mediated signaling in meristems maintenance. In Arabidopsis thaliana (Mouse-ear cress), this protein is Leucine-rich repeat receptor-like serine/threonine-protein kinase BAM2 (BAM2).